The sequence spans 256 residues: Small ribosomal subunit protein eS1 (256 aa).

Over residues 1 to 18 (MAVGKNKRLSKGKKGIKK) the composition is skewed to basic residues. The disordered stretch occupies residues 1–20 (MAVGKNKRLSKGKKGIKKRT). An N-acetylalanine; partial modification is found at Ala2.

The protein belongs to the eukaryotic ribosomal protein eS1 family. Component of the small ribosomal subunit. Mature ribosomes consist of a small (40S) and a large (60S) subunit. The 40S subunit contains about 33 different proteins and 1 molecule of RNA (18S). The 60S subunit contains about 49 different proteins and 3 molecules of RNA (25S, 5.8S and 5S).

The protein localises to the cytoplasm. In Emericella nidulans (strain FGSC A4 / ATCC 38163 / CBS 112.46 / NRRL 194 / M139) (Aspergillus nidulans), this protein is Small ribosomal subunit protein eS1 (rps1).